Here is a 108-residue protein sequence, read N- to C-terminus: Parvalbumin beta 1 (108 aa).

Alanine 1 is subject to N-acetylalanine. 2 consecutive EF-hand domains span residues 38 to 73 (KXXD…FCPK) and 77 to 108 (LTDA…LVKQ). Ca(2+)-binding residues include aspartate 51, aspartate 53, serine 55, phenylalanine 57, glutamate 59, glutamate 62, aspartate 90, aspartate 92, aspartate 94, methionine 96, and glutamate 101.

Belongs to the parvalbumin family.

In terms of biological role, in muscle, parvalbumin is thought to be involved in relaxation after contraction. It binds two calcium ions. The sequence is that of Parvalbumin beta 1 from Oncorhynchus mykiss (Rainbow trout).